The chain runs to 129 residues: Small ribosomal subunit protein uS11 (129 aa).

It belongs to the universal ribosomal protein uS11 family. Part of the 30S ribosomal subunit. Interacts with proteins S7 and S18. Binds to IF-3.

In terms of biological role, located on the platform of the 30S subunit, it bridges several disparate RNA helices of the 16S rRNA. Forms part of the Shine-Dalgarno cleft in the 70S ribosome. In Francisella tularensis subsp. tularensis (strain FSC 198), this protein is Small ribosomal subunit protein uS11.